A 454-amino-acid chain; its full sequence is tRNA modification GTPase MnmE (454 aa).

(6S)-5-formyl-5,6,7,8-tetrahydrofolate is bound by residues Arg23, Glu80, and Lys120. A TrmE-type G domain is found at 216 to 377 (GMKVVIAGRP…LRNHLKQSMG (162 aa)). Residue Asn226 coordinates K(+). Residues 226–231 (NAGKSS), 245–251 (TDIAGTT), 270–273 (DTAG), 335–338 (NKAD), and 358–360 (SAR) each bind GTP. Mg(2+) is bound at residue Ser230. Positions 245, 247, and 250 each coordinate K(+). Residue Thr251 coordinates Mg(2+). Lys454 is a binding site for (6S)-5-formyl-5,6,7,8-tetrahydrofolate.

The protein belongs to the TRAFAC class TrmE-Era-EngA-EngB-Septin-like GTPase superfamily. TrmE GTPase family. In terms of assembly, homodimer. Heterotetramer of two MnmE and two MnmG subunits. K(+) is required as a cofactor.

The protein resides in the cytoplasm. Its function is as follows. Exhibits a very high intrinsic GTPase hydrolysis rate. Involved in the addition of a carboxymethylaminomethyl (cmnm) group at the wobble position (U34) of certain tRNAs, forming tRNA-cmnm(5)s(2)U34. This is tRNA modification GTPase MnmE from Escherichia coli O7:K1 (strain IAI39 / ExPEC).